The sequence spans 487 residues: Cytochrome P450 2C5 (487 aa).

Cys432 contributes to the heme binding site.

Belongs to the cytochrome P450 family. The cofactor is heme.

The protein localises to the endoplasmic reticulum membrane. It is found in the microsome membrane. The catalysed reaction is an organic molecule + reduced [NADPH--hemoprotein reductase] + O2 = an alcohol + oxidized [NADPH--hemoprotein reductase] + H2O + H(+). Functionally, cytochromes P450 are a group of heme-thiolate monooxygenases. In liver microsomes, this enzyme is involved in an NADPH-dependent electron transport pathway. It oxidizes a variety of structurally unrelated compounds, including steroids, fatty acids, and xenobiotics. This chain is Cytochrome P450 2C5 (CYP2C5), found in Oryctolagus cuniculus (Rabbit).